The sequence spans 483 residues: UDP-N-acetylmuramoyl-L-alanyl-D-glutamate--2,6-diaminopimelate ligase (483 aa).

S30 is a binding site for UDP-N-acetyl-alpha-D-muramoyl-L-alanyl-D-glutamate. 109 to 115 (GTNGKTT) serves as a coordination point for ATP. UDP-N-acetyl-alpha-D-muramoyl-L-alanyl-D-glutamate contacts are provided by residues 151 to 152 (TT), S178, and R186. K218 is subject to N6-carboxylysine. Residues R380, 403–406 (DNPR), G453, and E457 each bind meso-2,6-diaminopimelate. The short motif at 403–406 (DNPR) is the Meso-diaminopimelate recognition motif element.

This sequence belongs to the MurCDEF family. MurE subfamily. The cofactor is Mg(2+). Carboxylation is probably crucial for Mg(2+) binding and, consequently, for the gamma-phosphate positioning of ATP.

It is found in the cytoplasm. The enzyme catalyses UDP-N-acetyl-alpha-D-muramoyl-L-alanyl-D-glutamate + meso-2,6-diaminopimelate + ATP = UDP-N-acetyl-alpha-D-muramoyl-L-alanyl-gamma-D-glutamyl-meso-2,6-diaminopimelate + ADP + phosphate + H(+). The protein operates within cell wall biogenesis; peptidoglycan biosynthesis. In terms of biological role, catalyzes the addition of meso-diaminopimelic acid to the nucleotide precursor UDP-N-acetylmuramoyl-L-alanyl-D-glutamate (UMAG) in the biosynthesis of bacterial cell-wall peptidoglycan. This chain is UDP-N-acetylmuramoyl-L-alanyl-D-glutamate--2,6-diaminopimelate ligase, found in Chlamydia abortus (strain DSM 27085 / S26/3) (Chlamydophila abortus).